Reading from the N-terminus, the 374-residue chain is AA14 family lytic polysaccharide monooxygenase B (374 aa).

The N-terminal stretch at Met1–Gly18 is a signal peptide. N-linked (GlcNAc...) asparagine glycans are attached at residues Asn31, Asn49, Asn94, and Asn151. 5 cysteine pairs are disulfide-bonded: Cys85–Cys108, Cys127–Cys154, Cys171–Cys176, Cys178–Cys200, and Cys220–Cys236. Asn235 and Asn315 each carry an N-linked (GlcNAc...) asparagine glycan. Residues Ile306–Phe374 are disordered. Low complexity predominate over residues Pro313–Ala344.

This sequence belongs to the polysaccharide monooxygenase AA14 family. Cu(2+) is required as a cofactor.

It localises to the secreted. In terms of biological role, lytic polysaccharide monooxygenase (LPMO) that oxidatively cleaves xylan with both C1 and C4 regioselectivity and that specifically targets the protective shield made by heteroxylans that cover cellulose microfibrils in wood. Catalysis by LPMOs requires the reduction of the active-site copper from Cu(II) to Cu(I) by a reducing agent and H(2)O(2) or O(2) as a cosubstrate. Cleavage occurs only when xylans are bound to cellulose and not when they are in solution. Increases the efficiency of wood saccharification through oxidative cleavage of highly refractory xylan-coated cellulose fibers via synergistic relationship with xylan-active enzymes, xylobiohydrolases and cellobiohydrolases. This Pycnoporus cinnabarinus (Cinnabar-red polypore) protein is AA14 family lytic polysaccharide monooxygenase B.